Consider the following 206-residue polypeptide: MNVLHIDSGILGEHSVSRRLTAAIVAQIKADRPDANVIYRDLVSERLQHLTGAQIMAPADLDGVDPALASDVRTGRQMLDEFLAADTIVVGAPMYNFSIPSQLKAWIDRLAVAGKTFRYTEAGPEGLAKGKKVIVASTRGGHYSAGPAAAMDHQEAYLRTVFGFFGITDVEFVRAEGLNLGADQKQFAIAEAEKTIAEGDVLRLAS.

Residues 15–17 (SVS), 94–97 (MYNF), and 138–141 (TRGG) each bind FMN.

Belongs to the azoreductase type 1 family. Homodimer. The cofactor is FMN.

It carries out the reaction 2 a quinone + NADH + H(+) = 2 a 1,4-benzosemiquinone + NAD(+). It catalyses the reaction N,N-dimethyl-1,4-phenylenediamine + anthranilate + 2 NAD(+) = 2-(4-dimethylaminophenyl)diazenylbenzoate + 2 NADH + 2 H(+). Quinone reductase that provides resistance to thiol-specific stress caused by electrophilic quinones. Functionally, also exhibits azoreductase activity. Catalyzes the reductive cleavage of the azo bond in aromatic azo compounds to the corresponding amines. This chain is FMN-dependent NADH:quinone oxidoreductase, found in Sinorhizobium fredii (strain NBRC 101917 / NGR234).